A 256-amino-acid chain; its full sequence is MQIYSEYYEKIGPRKLRLLVKRRLLFASTWLYINNYILLSIIMKLQTKHMILLGFVAVVVVFIIFMLTRKKKEGFSIGNIFGKVKGAVTGTVGKVVNVVKPQGYKPEFVNRVNFGKFWACPEGTTDWGSEDKQCLVSQYGPMMWRNKGGNEWGWSCPAGSAPNNSDDWNQKCVQGYSMKKLIDGQWRCTDTEIDTGKDWSNSDWFTAQQQCDRGNNKVFTRRMYIDGKWQCPDGTWDTGFTWSDGENGGKQCKYYP.

2 hydrophobic regions span residues 24-44 and 47-67; these read LLFASTWLYINNYILLSIIMK and TKHMILLGFVAVVVVFIIFML. 3 cysteine pairs are disulfide-bonded: C120–C134, C156–C172, and C188–C211.

In terms of assembly, interacts with the major capsid protein. In terms of processing, stabilized by 3 intramolecular disulfide bonds.

Its subcellular location is the virion. Its function is as follows. One of the minor capsid proteins that constitute a network internal to the major capsid proteins and outside the lipid membrane. The minor capsid proteins glue and stabilize the capsomers. The polypeptide is Minor capsid protein P7 (Paramecium bursaria Chlorella virus 1 (PBCV-1)).